The following is a 115-amino-acid chain: T cell receptor beta variable 2 (115 aa).

The N-terminal stretch at 1 to 19 (MDTWLVCWAIFSLLKAGLT) is a signal peptide. The Ig-like domain occupies 21–115 (PEVTQTPSHQ…SAMYFCASSE (95 aa)). Residues cysteine 42 and cysteine 111 are joined by a disulfide bond. An N-linked (GlcNAc...) asparagine glycan is attached at asparagine 93.

In terms of assembly, alpha-beta TR is a heterodimer composed of an alpha and beta chain; disulfide-linked. The alpha-beta TR is associated with the transmembrane signaling CD3 coreceptor proteins to form the TR-CD3 (TcR or TCR). The assembly of alpha-beta TR heterodimers with CD3 occurs in the endoplasmic reticulum where a single alpha-beta TR heterodimer associates with one CD3D-CD3E heterodimer, one CD3G-CD3E heterodimer and one CD247 homodimer forming a stable octameric structure. CD3D-CD3E and CD3G-CD3E heterodimers preferentially associate with TR alpha and TR beta chains, respectively. The association of the CD247 homodimer is the last step of TcR assembly in the endoplasmic reticulum and is required for transport to the cell surface.

Its subcellular location is the cell membrane. In terms of biological role, v region of the variable domain of T cell receptor (TR) beta chain that participates in the antigen recognition. Alpha-beta T cell receptors are antigen specific receptors which are essential to the immune response and are present on the cell surface of T lymphocytes. Recognize peptide-major histocompatibility (MH) (pMH) complexes that are displayed by antigen presenting cells (APC), a prerequisite for efficient T cell adaptive immunity against pathogens. Binding of alpha-beta TR to pMH complex initiates TR-CD3 clustering on the cell surface and intracellular activation of LCK that phosphorylates the ITAM motifs of CD3G, CD3D, CD3E and CD247 enabling the recruitment of ZAP70. In turn ZAP70 phosphorylates LAT, which recruits numerous signaling molecules to form the LAT signalosome. The LAT signalosome propagates signal branching to three major signaling pathways, the calcium, the mitogen-activated protein kinase (MAPK) kinase and the nuclear factor NF-kappa-B (NF-kB) pathways, leading to the mobilization of transcription factors that are critical for gene expression and essential for T cell growth and differentiation. The T cell repertoire is generated in the thymus, by V-(D)-J rearrangement. This repertoire is then shaped by intrathymic selection events to generate a peripheral T cell pool of self-MH restricted, non-autoaggressive T cells. Post-thymic interaction of alpha-beta TR with the pMH complexes shapes TR structural and functional avidity. The polypeptide is T cell receptor beta variable 2 (Homo sapiens (Human)).